Reading from the N-terminus, the 180-residue chain is Protein GrpE (180 aa).

This sequence belongs to the GrpE family. Homodimer.

It localises to the cytoplasm. In terms of biological role, participates actively in the response to hyperosmotic and heat shock by preventing the aggregation of stress-denatured proteins, in association with DnaK and GrpE. It is the nucleotide exchange factor for DnaK and may function as a thermosensor. Unfolded proteins bind initially to DnaJ; upon interaction with the DnaJ-bound protein, DnaK hydrolyzes its bound ATP, resulting in the formation of a stable complex. GrpE releases ADP from DnaK; ATP binding to DnaK triggers the release of the substrate protein, thus completing the reaction cycle. Several rounds of ATP-dependent interactions between DnaJ, DnaK and GrpE are required for fully efficient folding. This is Protein GrpE from Picrophilus torridus (strain ATCC 700027 / DSM 9790 / JCM 10055 / NBRC 100828 / KAW 2/3).